A 1074-amino-acid polypeptide reads, in one-letter code: Zinc finger protein 518B (1074 aa).

A compositionally biased stretch (polar residues) spans 12-24 (HLNGGHNSLTMSP). Residues 12 to 36 (HLNGGHNSLTMSPKQPDANGAPRPN) are disordered. 2 consecutive C2H2-type zinc fingers follow at residues 162-184 (FICSHCSYISYTKGEFQRHLVKH) and 190-213 (YQCEYCDYGAIRNDYIVKHTKRVH). Glycyl lysine isopeptide (Lys-Gly) (interchain with G-Cter in SUMO2) cross-links involve residues K482, K491, and K558. A disordered region spans residues 568-590 (SNRKQEDNQTEEHKAVSTVGQIS). A compositionally biased stretch (basic and acidic residues) spans 570–582 (RKQEDNQTEEHKA). Residue K594 forms a Glycyl lysine isopeptide (Lys-Gly) (interchain with G-Cter in SUMO2) linkage. 2 disordered regions span residues 603–632 (TGEDRSQQPGDKPLELKNSERTNNTNDGPV) and 678–704 (KPSSLASNSAHRRSVGQASKGTSKATS). Residues 604 to 622 (GEDRSQQPGDKPLELKNSE) are compositionally biased toward basic and acidic residues. The segment covering 693-704 (GQASKGTSKATS) has biased composition (polar residues). Residues K809, K846, and K860 each participate in a glycyl lysine isopeptide (Lys-Gly) (interchain with G-Cter in SUMO2) cross-link. Residues 1036–1058 (FKCWFCGRLYEDQEEWMSHGQRH) form a C2H2-type 3 zinc finger.

The protein belongs to the krueppel C2H2-type zinc-finger protein family.

Its subcellular location is the nucleus. Through its association with the EHMT1-EHMT2/G9A and PRC2/EED-EZH2 histone methyltransferase complexes may function in gene silencing, regulating repressive post-translational methylation of histone tails at promoters of target genes. In Homo sapiens (Human), this protein is Zinc finger protein 518B (ZNF518B).